Reading from the N-terminus, the 349-residue chain is KH domain-containing, RNA-binding, signal transduction-associated protein 2 (349 aa).

Positions 65-135 constitute a KH domain; it reads LIPVKQYPKF…HLSDELHVLI (71 aa). 2 disordered regions span residues 181–263 and 320–349; these read SEES…PPPA and EEWT…YGRY. Residues 218–231 show a composition bias toward low complexity; the sequence is RGVLTPRGTTVTRG. Residues R230 and R240 each carry the omega-N-methylarginine modification. The segment covering 340–349 has biased composition (basic and acidic residues); the sequence is GYREHPYGRY.

It belongs to the KHDRBS family. As to quaternary structure, self-associates to form homooligomers. Interacts with SAFB, SFRS9 and YTHDC1. Found in a complex with KHDRBS1, KHDRBS2 and KHDRBS3. Interacts with RBMX. Interacts with the SH3 domains of FYN and PLCG1. Interacts with the SH2 domains of FYN, GRAP2, PLCG1 and RASA1. Interacts with RBMX. Post-translationally, methylated. Phosphorylated on tyrosine residues by FYN. Tyrosine phosphorylated by PTK6 and SRC. Tyrosine phosphorylated by SRC during mitosis. Expressed in the cortex, cerebellum, striatum, midbrain, brainstem and thalamus of the brain (at protein level). Expressed in neurons (at protein level). Expressed in brain and testis. Expressed in the dentate gyrus of the hippocampus.

The protein resides in the nucleus. In terms of biological role, RNA-binding protein that plays a role in the regulation of alternative splicing and influences mRNA splice site selection and exon inclusion. Its phosphorylation by FYN inhibits its ability to regulate splice site selection. Induces an increased concentration-dependent incorporation of exon in CD44 pre-mRNA by direct binding to purine-rich exonic enhancer. May function as an adapter protein for Src kinases during mitosis. Binds both poly(A) and poly(U) homopolymers. Phosphorylation by PTK6 inhibits its RNA-binding ability. This Rattus norvegicus (Rat) protein is KH domain-containing, RNA-binding, signal transduction-associated protein 2 (Khdrbs2).